The following is a 620-amino-acid chain: Probable potassium transport system protein Kup (620 aa).

The next 12 membrane-spanning stretches (helical) occupy residues 11–31, 51–71, 100–120, 138–158, 167–187, 202–222, 246–266, 288–308, 334–354, 364–384, 396–416, and 418–438; these read LAFL…LYAF, ILSL…LLLV, IAML…VITP, LAPY…AVQA, FFAP…AHAI, AVHF…LVVL, WFAL…AYLL, LILL…SGIF, GQIY…FVML, AAYG…LVLV, VVTI…STST, and LMEG…VMYI.

The protein belongs to the HAK/KUP transporter (TC 2.A.72) family.

The protein resides in the cell inner membrane. It carries out the reaction K(+)(in) + H(+)(in) = K(+)(out) + H(+)(out). Functionally, transport of potassium into the cell. Likely operates as a K(+):H(+) symporter. This Vibrio cholerae serotype O1 (strain ATCC 39541 / Classical Ogawa 395 / O395) protein is Probable potassium transport system protein Kup.